We begin with the raw amino-acid sequence, 131 residues long: Histone H2A.2 (131 aa).

The residue at position 2 (Ser2) is an N-acetylserine. Lys5 and Lys8 each carry N6-acetyllysine. Residue Gln106 is modified to N5-methylglutamine. Phosphoserine is present on Ser128. Positions 128-129 match the [ST]-Q motif motif; it reads SQ.

The protein belongs to the histone H2A family. In terms of assembly, the nucleosome is a histone octamer containing two molecules each of H2A, H2B, H3 and H4 assembled in one H3-H4 heterotetramer and two H2A-H2B heterodimers. The octamer wraps approximately 147 bp of DNA. Post-translationally, phosphorylated to form H2AS128ph (gamma-H2A) in response to DNA double-strand breaks (DSBs) generated by exogenous genotoxic agents and by stalled replication forks. Phosphorylation is dependent on the DNA damage checkpoint kinases MEC1/ATR and TEL1/ATM, spreads on either side of a detected DSB site and may mark the surrounding chromatin for recruitment of proteins required for DNA damage signaling and repair. Gamma-H2A is removed from the DNA prior to the strand invasion-primer extension step of the repair process and subsequently dephosphorylated by PPH3, a component of the histone H2A phosphatase complex (HTP-C). Dephosphorylation is necessary for efficient recovery from the DNA damage checkpoint. In terms of processing, acetylated by ESA1 to form H2AK4ac and H2AK7ac.

It is found in the nucleus. Its subcellular location is the chromosome. Its function is as follows. Core component of nucleosome which plays a central role in DNA double strand break (DSB) repair. Nucleosomes wrap and compact DNA into chromatin, limiting DNA accessibility to the cellular machineries which require DNA as a template. Histones thereby play a central role in transcription regulation, DNA repair, DNA replication and chromosomal stability. DNA accessibility is regulated via a complex set of post-translational modifications of histones, also called histone code, and nucleosome remodeling. This is Histone H2A.2 (HTA2) from Candida glabrata (strain ATCC 2001 / BCRC 20586 / JCM 3761 / NBRC 0622 / NRRL Y-65 / CBS 138) (Yeast).